Here is a 358-residue protein sequence, read N- to C-terminus: UPF0725 protein At4g29550 (358 aa).

The segment at 31–82 is disordered; sequence LNKHPPSGSGWTDEDDDNDDVFSSSFISKEELSDAVHNDPPSGWTDEDDDDQ. A compositionally biased stretch (basic and acidic residues) spans 58-67; that stretch reads SKEELSDAVH.

It belongs to the UPF0725 (EMB2204) family.

The polypeptide is UPF0725 protein At4g29550 (Arabidopsis thaliana (Mouse-ear cress)).